A 493-amino-acid polypeptide reads, in one-letter code: Alcohol-forming fatty acyl-CoA reductase (493 aa).

It belongs to the fatty acyl-CoA reductase family.

The catalysed reaction is a long-chain fatty acyl-CoA + 2 NADPH + 2 H(+) = a long-chain primary fatty alcohol + 2 NADP(+) + CoA. In terms of biological role, NADPH-dependent alcohol-forming fatty acyl-coenzyme A reductase that catalyzes the reduction of fatty acyl-CoA to fatty alcohols. The recombinant enzyme accepts saturated and mono-unsaturated fatty acyl-CoAs of 16 to 22 carbons. The chain is Alcohol-forming fatty acyl-CoA reductase from Simmondsia chinensis (Jojoba).